The following is a 141-amino-acid chain: Deoxyuridine 5'-triphosphate nucleotidohydrolase (141 aa).

Belongs to the dUTPase family. Mg(2+) serves as cofactor.

The catalysed reaction is dUTP + H2O = dUMP + diphosphate + H(+). Its pathway is pyrimidine metabolism; dUMP biosynthesis; dUMP from dCTP (dUTP route): step 2/2. Its function is as follows. This enzyme is involved in nucleotide metabolism: it produces dUMP, the immediate precursor of thymidine nucleotides and it decreases the intracellular concentration of dUTP so that uracil cannot be incorporated into DNA. This chain is Deoxyuridine 5'-triphosphate nucleotidohydrolase, found in Chlorella (PBCV-1).